The chain runs to 218 residues: Pyridoxine/pyridoxamine 5'-phosphate oxidase (218 aa).

Substrate contacts are provided by residues arginine 14–tyrosine 17 and lysine 72. FMN-binding positions include arginine 67–lysine 72, tyrosine 82–threonine 83, arginine 88, lysine 89, and glutamine 111. Substrate is bound by residues tyrosine 129, arginine 133, and serine 137. FMN contacts are provided by residues glutamine 146 to serine 147 and tryptophan 191. Substrate is bound at residue arginine 197 to histidine 199. An FMN-binding site is contributed by arginine 201.

It belongs to the pyridoxamine 5'-phosphate oxidase family. As to quaternary structure, homodimer. The cofactor is FMN.

The enzyme catalyses pyridoxamine 5'-phosphate + O2 + H2O = pyridoxal 5'-phosphate + H2O2 + NH4(+). It carries out the reaction pyridoxine 5'-phosphate + O2 = pyridoxal 5'-phosphate + H2O2. Its pathway is cofactor metabolism; pyridoxal 5'-phosphate salvage; pyridoxal 5'-phosphate from pyridoxamine 5'-phosphate: step 1/1. It participates in cofactor metabolism; pyridoxal 5'-phosphate salvage; pyridoxal 5'-phosphate from pyridoxine 5'-phosphate: step 1/1. In terms of biological role, catalyzes the oxidation of either pyridoxine 5'-phosphate (PNP) or pyridoxamine 5'-phosphate (PMP) into pyridoxal 5'-phosphate (PLP). The protein is Pyridoxine/pyridoxamine 5'-phosphate oxidase of Escherichia coli O139:H28 (strain E24377A / ETEC).